Reading from the N-terminus, the 336-residue chain is Putative cysteine synthase (336 aa).

Residue lysine 41 is modified to N6-(pyridoxal phosphate)lysine. Pyridoxal 5'-phosphate contacts are provided by residues asparagine 71, glycine 179 to serine 183, and serine 269.

This sequence belongs to the cysteine synthase/cystathionine beta-synthase family. Pyridoxal 5'-phosphate serves as cofactor.

It carries out the reaction O-acetyl-L-serine + hydrogen sulfide = L-cysteine + acetate. Functionally, as it is highly similar to bacterial and plant cysteine synthases, it is possible that it catalyzes a related reaction. The polypeptide is Putative cysteine synthase (Sinorhizobium fredii (strain NBRC 101917 / NGR234)).